We begin with the raw amino-acid sequence, 210 residues long: MSTHHGPLRVGIGGPVGSGKTALMDLLCKSMRERYDIAAITNDIYTKWDAEFLVRSGSLTPDRIAGVETGGCPHTAIREDASMNLAAVAEMRSKFPGLDLVLIESGGDNLAATFSPELADLTIYVIDVSAGDKIPSKGGPGITRSDLLVINKIDLAPYVGASLDKMDADARRMRGERPFVMTNLKTREGLERILSFIETKGGLKPKADTA.

14 to 21 (GPVGSGKT) provides a ligand contact to GTP.

This sequence belongs to the SIMIBI class G3E GTPase family. UreG subfamily. As to quaternary structure, homodimer. UreD, UreF and UreG form a complex that acts as a GTP-hydrolysis-dependent molecular chaperone, activating the urease apoprotein by helping to assemble the nickel containing metallocenter of UreC. The UreE protein probably delivers the nickel.

The protein resides in the cytoplasm. Its function is as follows. Facilitates the functional incorporation of the urease nickel metallocenter. This process requires GTP hydrolysis, probably effectuated by UreG. The polypeptide is Urease accessory protein UreG (Rhodopseudomonas palustris (strain BisB5)).